The primary structure comprises 179 residues: MSTGSLSDVEDLQEVEMLDCDSLKVDSNKEFGTSNESTEEGSNCENGSPQKGRGGLGKRRKAPTKKSPLSGVSQEGKQVQRNAANARERARMRVLSKAFSRLKTTLPWVPPDTKLSKLDTLRLASSYIAHLRQILANDKYENGYIHPVNLTWPFMVAGKPENDLKEVVTANRLCGTTAS.

The disordered stretch occupies residues 19-88 (DCDSLKVDSN…VQRNAANARE (70 aa)). 2 stretches are compositionally biased toward polar residues: residues 30 to 49 (EFGTSNESTEEGSNCENGSP) and 70 to 80 (SGVSQEGKQVQ). The bHLH domain occupies 79–131 (VQRNAANARERARMRVLSKAFSRLKTTLPWVPPDTKLSKLDTLRLASSYIAHL).

As to quaternary structure, efficient DNA binding requires dimerization with another bHLH protein. Forms a heterodimer with TCF3 and binds the E box (5'-CANNTG-3'). As to expression, expressed at high levels in lung, kidney, gut, heart, ovary and podocytes (visceral glomerular epithelial cells). Also found in spleen, large intestine, uterus, bladder and testis.

The protein localises to the nucleus. In terms of biological role, involved in epithelial-mesenchymal interactions in kidney and lung morphogenesis that include epithelial differentiation and branching morphogenesis. May be involved in the organogenesis of the spleen and heart and in cardiac and coronary artery development. May function in the development and sex differentiation of gonad via transcriptional regulation of AD4BP/SF-1. This chain is Transcription factor 21 (Tcf21), found in Mus musculus (Mouse).